A 492-amino-acid polypeptide reads, in one-letter code: Bifunctional protein GlmU (492 aa).

Residues 1–241 (MTFRGDTAVV…SALVAGVNDR (241 aa)) form a pyrophosphorylase region. UDP-N-acetyl-alpha-D-glucosamine contacts are provided by residues 12–15 (LAAG), Lys-26, Gln-83, and 88–89 (GT). Mg(2+) is bound at residue Asp-114. UDP-N-acetyl-alpha-D-glucosamine contacts are provided by Gly-151, Glu-166, Asn-181, and Asn-239. A Mg(2+)-binding site is contributed by Asn-239. A linker region spans residues 242-262 (VQLAQLGAELNRRIVAAHQMA). Residues 263 to 492 (GVTVIDPATT…TPPPDADQTP (230 aa)) form an N-acetyltransferase region. Residues Arg-344 and Lys-362 each coordinate UDP-N-acetyl-alpha-D-glucosamine. His-374 acts as the Proton acceptor in catalysis. UDP-N-acetyl-alpha-D-glucosamine contacts are provided by Tyr-377 and Asn-388. Residues Ala-391, 397–398 (NY), and Ala-434 each bind acetyl-CoA. Residues 451 to 492 (GGPQRNIEDWVQQKRPGTPSAEAARKASAEQSTPPPDADQTP) form a disordered region. The segment covering 483-492 (TPPPDADQTP) has biased composition (pro residues).

This sequence in the N-terminal section; belongs to the N-acetylglucosamine-1-phosphate uridyltransferase family. The protein in the C-terminal section; belongs to the transferase hexapeptide repeat family. In terms of assembly, homotrimer. The cofactor is Mg(2+).

The protein resides in the cytoplasm. The enzyme catalyses alpha-D-glucosamine 1-phosphate + acetyl-CoA = N-acetyl-alpha-D-glucosamine 1-phosphate + CoA + H(+). It carries out the reaction N-acetyl-alpha-D-glucosamine 1-phosphate + UTP + H(+) = UDP-N-acetyl-alpha-D-glucosamine + diphosphate. The protein operates within nucleotide-sugar biosynthesis; UDP-N-acetyl-alpha-D-glucosamine biosynthesis; N-acetyl-alpha-D-glucosamine 1-phosphate from alpha-D-glucosamine 6-phosphate (route II): step 2/2. It participates in nucleotide-sugar biosynthesis; UDP-N-acetyl-alpha-D-glucosamine biosynthesis; UDP-N-acetyl-alpha-D-glucosamine from N-acetyl-alpha-D-glucosamine 1-phosphate: step 1/1. It functions in the pathway bacterial outer membrane biogenesis; LPS lipid A biosynthesis. Functionally, catalyzes the last two sequential reactions in the de novo biosynthetic pathway for UDP-N-acetylglucosamine (UDP-GlcNAc). The C-terminal domain catalyzes the transfer of acetyl group from acetyl coenzyme A to glucosamine-1-phosphate (GlcN-1-P) to produce N-acetylglucosamine-1-phosphate (GlcNAc-1-P), which is converted into UDP-GlcNAc by the transfer of uridine 5-monophosphate (from uridine 5-triphosphate), a reaction catalyzed by the N-terminal domain. The chain is Bifunctional protein GlmU from Mycobacterium marinum (strain ATCC BAA-535 / M).